The following is a 289-amino-acid chain: uncharacterized protein (289 aa).

A signal peptide spans 1-19; that stretch reads MAKWLGAPLARGVSTATRA. The next 2 helical transmembrane spans lie at 90-110 and 257-277; these read GLLA…GWGV and AALS…LVFA.

Its subcellular location is the cell membrane. This is an uncharacterized protein from Mycobacterium tuberculosis (strain ATCC 25618 / H37Rv).